A 184-amino-acid polypeptide reads, in one-letter code: Large ribosomal subunit protein uL6 (184 aa).

Belongs to the universal ribosomal protein uL6 family. As to quaternary structure, part of the 50S ribosomal subunit.

Functionally, this protein binds to the 23S rRNA, and is important in its secondary structure. It is located near the subunit interface in the base of the L7/L12 stalk, and near the tRNA binding site of the peptidyltransferase center. The chain is Large ribosomal subunit protein uL6 from Thermotoga neapolitana (strain ATCC 49049 / DSM 4359 / NBRC 107923 / NS-E).